Consider the following 417-residue polypeptide: Serine hydroxymethyltransferase (417 aa).

(6S)-5,6,7,8-tetrahydrofolate is bound by residues L121 and 125–127 (GHL). K229 is modified (N6-(pyridoxal phosphate)lysine). 355–357 (SPF) contacts (6S)-5,6,7,8-tetrahydrofolate.

The protein belongs to the SHMT family. Homodimer. Pyridoxal 5'-phosphate is required as a cofactor.

Its subcellular location is the cytoplasm. It catalyses the reaction (6R)-5,10-methylene-5,6,7,8-tetrahydrofolate + glycine + H2O = (6S)-5,6,7,8-tetrahydrofolate + L-serine. It functions in the pathway one-carbon metabolism; tetrahydrofolate interconversion. The protein operates within amino-acid biosynthesis; glycine biosynthesis; glycine from L-serine: step 1/1. In terms of biological role, catalyzes the reversible interconversion of serine and glycine with tetrahydrofolate (THF) serving as the one-carbon carrier. This reaction serves as the major source of one-carbon groups required for the biosynthesis of purines, thymidylate, methionine, and other important biomolecules. Also exhibits THF-independent aldolase activity toward beta-hydroxyamino acids, producing glycine and aldehydes, via a retro-aldol mechanism. The polypeptide is Serine hydroxymethyltransferase (Stenotrophomonas maltophilia (strain K279a)).